We begin with the raw amino-acid sequence, 177 residues long: Isopentenyl-diphosphate Delta-isomerase (177 aa).

Mn(2+) is bound by residues His-22 and His-28. The region spanning 26-160 (LRHMAISVFV…PERFTPWLRI (135 aa)) is the Nudix hydrolase domain. Cys-62 is a catalytic residue. Residue His-64 coordinates Mn(2+). Glu-82 provides a ligand contact to Mg(2+). Positions 108 and 110 each coordinate Mn(2+). Glu-110 is a catalytic residue.

This sequence belongs to the IPP isomerase type 1 family. Requires Mg(2+) as cofactor. The cofactor is Mn(2+).

The protein resides in the cytoplasm. The enzyme catalyses isopentenyl diphosphate = dimethylallyl diphosphate. It participates in isoprenoid biosynthesis; dimethylallyl diphosphate biosynthesis; dimethylallyl diphosphate from isopentenyl diphosphate: step 1/1. Its pathway is porphyrin-containing compound metabolism; chlorophyll biosynthesis. In terms of biological role, catalyzes the 1,3-allylic rearrangement of the homoallylic substrate isopentenyl (IPP) to its highly electrophilic allylic isomer, dimethylallyl diphosphate (DMAPP). The sequence is that of Isopentenyl-diphosphate Delta-isomerase from Cereibacter sphaeroides (strain ATCC 17029 / ATH 2.4.9) (Rhodobacter sphaeroides).